The chain runs to 511 residues: Phenylalanine--tRNA ligase alpha subunit (511 aa).

L-phenylalanine-binding positions include Thr352, 390-392 (QVE), Tyr429, and Phe455.

The protein belongs to the class-II aminoacyl-tRNA synthetase family. Phe-tRNA synthetase alpha subunit type 2 subfamily. As to quaternary structure, tetramer of two alpha and two beta subunits. It depends on Mg(2+) as a cofactor.

The protein localises to the cytoplasm. It catalyses the reaction tRNA(Phe) + L-phenylalanine + ATP = L-phenylalanyl-tRNA(Phe) + AMP + diphosphate + H(+). The sequence is that of Phenylalanine--tRNA ligase alpha subunit from Methanothermobacter thermautotrophicus (strain ATCC 29096 / DSM 1053 / JCM 10044 / NBRC 100330 / Delta H) (Methanobacterium thermoautotrophicum).